Here is a 130-residue protein sequence, read N- to C-terminus: Methylglyoxal synthase (130 aa).

Positions 1–130 constitute an MGS-like domain; sequence MMTRPRIALI…AELSRVEAQP (130 aa). Residues histidine 12, lysine 16, 38–41, and 58–59 each bind substrate; these read TGTT and SG. The Proton donor/acceptor role is filled by aspartate 64. Histidine 91 contributes to the substrate binding site.

This sequence belongs to the methylglyoxal synthase family.

The enzyme catalyses dihydroxyacetone phosphate = methylglyoxal + phosphate. Catalyzes the formation of methylglyoxal from dihydroxyacetone phosphate. The chain is Methylglyoxal synthase from Cupriavidus pinatubonensis (strain JMP 134 / LMG 1197) (Cupriavidus necator (strain JMP 134)).